The following is a 3165-amino-acid chain: ORFB polyprotein (3165 aa).

Positions M271 to G418 constitute a Peptidase C8 domain. Residues C341 and H388 each act as for papain-like protease p48 activity in the active site. Residues A453 to E472 form a disordered region. A run of 6 helical transmembrane segments spans residues I791 to Y811, Y823 to C843, A1166 to M1186, K1193 to W1213, F1215 to Y1235, and A1356 to P1376. The tract at residues F1793–W2208 is RNA-directed RNA polymerase. The next 3 helical transmembrane spans lie at V2495–V2515, L2517–W2537, and L2590–F2610. A Helicase ATP-binding domain is found at A2651 to K2796. A2664–S2671 serves as a coordination point for ATP. Positions D2751–H2754 match the DEFH box motif.

This sequence in the C-terminal section; belongs to the DEAD box helicase family. Papain-like protease p48 is autocatalytically processed. The putative RNA-directed RNA polymerase/helicase may be further processed.

It localises to the host membrane. It carries out the reaction RNA(n) + a ribonucleoside 5'-triphosphate = RNA(n+1) + diphosphate. It catalyses the reaction ATP + H2O = ADP + phosphate + H(+). Functionally, papain-like protease p48 is a cysteine protease of the peptidase family C8. The chain is ORFB polyprotein from Cryphonectria hypovirus 1 (strain EP713) (CHV-1/EP713).